Consider the following 130-residue polypeptide: Histone H2A type 1-B/E (130 aa).

The disordered stretch occupies residues 1–22 (MSGRGKQGGKARAKAKTRSSRA). At serine 2 the chain carries N-acetylserine. Position 2 is a phosphoserine; by RPS6KA5 (serine 2). Citrulline; alternate is present on arginine 4. Arginine 4 is modified (symmetric dimethylarginine; by PRMT5; alternate). 2 positions are modified to N6-(2-hydroxyisobutyryl)lysine; alternate: lysine 6 and lysine 10. Lysine 6 bears the N6-acetyllysine; alternate mark. The span at 7–19 (QGGKARAKAKTRS) shows a compositional bias: basic residues. N6-(beta-hydroxybutyryl)lysine; alternate occurs at positions 10 and 14. Lysine 10 bears the N6-lactoyllysine; alternate mark. Residue lysine 10 is modified to N6-succinyllysine; alternate. A Glycyl lysine isopeptide (Lys-Gly) (interchain with G-Cter in ubiquitin); alternate cross-link involves residue lysine 14. Lysine 16 participates in a covalent cross-link: Glycyl lysine isopeptide (Lys-Gly) (interchain with G-Cter in ubiquitin). Lysine 37 carries the N6-(2-hydroxyisobutyryl)lysine; alternate modification. Lysine 37 is subject to N6-(beta-hydroxybutyryl)lysine; alternate. Position 37 is an N6-crotonyllysine; alternate (lysine 37). An N6-(2-hydroxyisobutyryl)lysine mark is found at lysine 75 and lysine 76. Lysine 96 is modified (N6-(2-hydroxyisobutyryl)lysine; alternate). N6-(beta-hydroxybutyryl)lysine; alternate is present on lysine 96. An N6-succinyllysine; alternate modification is found at lysine 96. Lysine 96 carries the post-translational modification N6-glutaryllysine; alternate. Glutamine 105 carries the post-translational modification N5-methylglutamine. An N6-(2-hydroxyisobutyryl)lysine; alternate modification is found at lysine 119. Position 119 is an N6-(beta-hydroxybutyryl)lysine; alternate (lysine 119). Lysine 119 and lysine 120 each carry N6-crotonyllysine; alternate. N6-glutaryllysine; alternate occurs at positions 119 and 120. Residue lysine 120 forms a Glycyl lysine isopeptide (Lys-Gly) (interchain with G-Cter in ubiquitin); alternate linkage. Residue threonine 121 is modified to Phosphothreonine; by DCAF1. Position 126 is an N6-crotonyllysine; alternate (lysine 126). Lysine 126 carries the N6-glutaryllysine; alternate modification.

This sequence belongs to the histone H2A family. In terms of assembly, the nucleosome is a histone octamer containing two molecules each of H2A, H2B, H3 and H4 assembled in one H3-H4 heterotetramer and two H2A-H2B heterodimers. The octamer wraps approximately 147 bp of DNA. In terms of processing, deiminated on Arg-4 in granulocytes upon calcium entry. Monoubiquitination of Lys-120 (H2AK119Ub) by RING1, TRIM37 and RNF2/RING2 complex gives a specific tag for epigenetic transcriptional repression and participates in X chromosome inactivation of female mammals. It is involved in the initiation of both imprinted and random X inactivation. Ubiquitinated H2A is enriched in inactive X chromosome chromatin. Ubiquitination of H2A functions downstream of methylation of 'Lys-27' of histone H3 (H3K27me). H2AK119Ub by RNF2/RING2 can also be induced by ultraviolet and may be involved in DNA repair. Monoubiquitination of Lys-120 (H2AK119Ub) by TRIM37 may promote transformation of cells in a number of breast cancers. Following DNA double-strand breaks (DSBs), it is ubiquitinated through 'Lys-63' linkage of ubiquitin moieties by the E2 ligase UBE2N and the E3 ligases RNF8 and RNF168, leading to the recruitment of repair proteins to sites of DNA damage. Ubiquitination at Lys-14 and Lys-16 (H2AK13Ub and H2AK15Ub, respectively) in response to DNA damage is initiated by RNF168 that mediates monoubiquitination at these 2 sites, and 'Lys-63'-linked ubiquitin are then conjugated to monoubiquitin; RNF8 is able to extend 'Lys-63'-linked ubiquitin chains in vitro. Deubiquitinated by USP51 at Lys-14 and Lys-16 (H2AK13Ub and H2AK15Ub, respectively) after damaged DNA is repaired. H2AK119Ub and ionizing radiation-induced 'Lys-63'-linked ubiquitination (H2AK13Ub and H2AK15Ub) are distinct events. Post-translationally, phosphorylation on Ser-2 (H2AS1ph) is enhanced during mitosis. Phosphorylation on Ser-2 by RPS6KA5/MSK1 directly represses transcription. Acetylation of H3 inhibits Ser-2 phosphorylation by RPS6KA5/MSK1. Phosphorylation at Thr-121 (H2AT120ph) by DCAF1 is present in the regulatory region of many tumor suppresor genes and down-regulates their transcription. In terms of processing, glutamine methylation at Gln-105 (H2AQ104me) by FBL is specifically dedicated to polymerase I. It is present at 35S ribosomal DNA locus and impairs binding of the FACT complex. Symmetric dimethylation on Arg-4 by the PRDM1/PRMT5 complex may play a crucial role in the germ-cell lineage. Post-translationally, crotonylation (Kcr) is specifically present in male germ cells and marks testis-specific genes in post-meiotic cells, including X-linked genes that escape sex chromosome inactivation in haploid cells. Crotonylation marks active promoters and enhancers and confers resistance to transcriptional repressors. It is also associated with post-meiotically activated genes on autosomes. In terms of processing, lactylated in macrophages by EP300/P300 by using lactoyl-CoA directly derived from endogenous or exogenous lactate, leading to stimulates gene transcription.

Its subcellular location is the nucleus. It is found in the chromosome. In terms of biological role, core component of nucleosome. Nucleosomes wrap and compact DNA into chromatin, limiting DNA accessibility to the cellular machineries which require DNA as a template. Histones thereby play a central role in transcription regulation, DNA repair, DNA replication and chromosomal stability. DNA accessibility is regulated via a complex set of post-translational modifications of histones, also called histone code, and nucleosome remodeling. In Homo sapiens (Human), this protein is Histone H2A type 1-B/E.